A 70-amino-acid chain; its full sequence is uncharacterized protein (70 aa).

The HTH cro/C1-type domain maps to 5–59 (IREFRAKYGMTQEELAKKVGVRRETIVFLEKGKYNPSLRLAYKIARVFNARIEDL). A DNA-binding region (H-T-H motif) is located at residues 16 to 35 (QEELAKKVGVRRETIVFLEK).

This is an uncharacterized protein from Archaeoglobus fulgidus (strain ATCC 49558 / DSM 4304 / JCM 9628 / NBRC 100126 / VC-16).